The chain runs to 664 residues: Exoribonuclease 2 (664 aa).

The 329-residue stretch at 193–521 (RIDMTHIPFV…INHRMLKALI (329 aa)) folds into the RNB domain. In terms of domain architecture, S1 motif spans 568–650 (QTLFTGEIFD…ENRSLVAKPT (83 aa)).

Belongs to the RNR ribonuclease family. RNase II subfamily.

It is found in the cytoplasm. It catalyses the reaction Exonucleolytic cleavage in the 3'- to 5'-direction to yield nucleoside 5'-phosphates.. In terms of biological role, involved in mRNA degradation. Hydrolyzes single-stranded polyribonucleotides processively in the 3' to 5' direction. This Vibrio vulnificus (strain CMCP6) protein is Exoribonuclease 2.